The sequence spans 497 residues: Cytochrome P450 monooxygenase opdB (497 aa).

Residues tyrosine 26–glycine 46 form a helical membrane-spanning segment. The interval methionine 69 to proline 90 is disordered. Cysteine 454 provides a ligand contact to heme.

Heme serves as cofactor.

It is found in the membrane. It functions in the pathway secondary metabolite biosynthesis. Its function is as follows. Cytochrome P450 monooxygenase; part of the gene cluster that mediates the biosynthesis of oxopyrrolidines, polyketide-amino acid hybrid compounds with feature structures of tetramic acid. Does not seem to play a role in oxopyrrolidines A and B biosynthesis. May be involved in further modifications of these oxopyrrolidines. The chain is Cytochrome P450 monooxygenase opdB from Penicillium oxalicum (strain 114-2 / CGMCC 5302) (Penicillium decumbens).